A 304-amino-acid chain; its full sequence is Recombination-associated protein RdgC (304 aa).

This sequence belongs to the RdgC family.

It is found in the cytoplasm. The protein resides in the nucleoid. May be involved in recombination. This Shewanella baltica (strain OS223) protein is Recombination-associated protein RdgC.